We begin with the raw amino-acid sequence, 358 residues long: Heme A synthase 1 (358 aa).

Helical transmembrane passes span 11–31 (LVGTWLLVICFMIFGMVVGGG), 98–117 (WGRLMAVVFLVPLAVFRLRG), 123–143 (LTAWLLFLFGLGAGEATMGWY), 159–179 (LYLGPHFVLAMLIFTAMLWTA), and 199–219 (LLSVSIGLIIATIGLGALVAA). Residue His-262 coordinates heme. Transmembrane regions (helical) follow at residues 264–284 (VAATVTAIVVVIAAAMGLRAP), 292–312 (LFLLLAGLVSLQYILGMSTLV), and 315–335 (MAELGYVHELNAVLLLAACIA). His-322 contacts heme.

The protein belongs to the COX15/CtaA family. Type 2 subfamily. As to quaternary structure, interacts with CtaB. Requires heme b as cofactor.

Its subcellular location is the cell membrane. The enzyme catalyses Fe(II)-heme o + 2 A + H2O = Fe(II)-heme a + 2 AH2. Its pathway is porphyrin-containing compound metabolism; heme A biosynthesis; heme A from heme O: step 1/1. Catalyzes the conversion of heme O to heme A by two successive hydroxylations of the methyl group at C8. The first hydroxylation forms heme I, the second hydroxylation results in an unstable dihydroxymethyl group, which spontaneously dehydrates, resulting in the formyl group of heme A. The protein is Heme A synthase 1 of Acidiphilium cryptum (strain JF-5).